We begin with the raw amino-acid sequence, 140 residues long: Large ribosomal subunit protein uL16 (140 aa).

This sequence belongs to the universal ribosomal protein uL16 family. In terms of assembly, part of the 50S ribosomal subunit.

Its function is as follows. Binds 23S rRNA and is also seen to make contacts with the A and possibly P site tRNAs. This chain is Large ribosomal subunit protein uL16, found in Syntrophus aciditrophicus (strain SB).